A 218-amino-acid chain; its full sequence is GTP cyclohydrolase 1 (218 aa).

Positions 109, 112, and 180 each coordinate Zn(2+).

Belongs to the GTP cyclohydrolase I family. In terms of assembly, toroid-shaped homodecamer, composed of two pentamers of five dimers.

The catalysed reaction is GTP + H2O = 7,8-dihydroneopterin 3'-triphosphate + formate + H(+). It participates in cofactor biosynthesis; 7,8-dihydroneopterin triphosphate biosynthesis; 7,8-dihydroneopterin triphosphate from GTP: step 1/1. This is GTP cyclohydrolase 1 (folE) from Pasteurella multocida (strain Pm70).